The sequence spans 215 residues: Adenylate kinase (215 aa).

Residue 10–15 (GAGKGT) coordinates ATP. Residues 30–59 (STGDMLRAAVKAGSPLGQQVKGVMDSGGLV) form an NMP region. Residues Thr-31, Arg-36, 57 to 59 (GLV), 85 to 88 (GFPR), and Gln-92 contribute to the AMP site. Positions 122–159 (GRRVHPASGRVYHTEHNPPKVAGKDDVTGEDLIQREDD) are LID. Residues Arg-123 and 132–133 (VY) each bind ATP. Arg-156 and Arg-167 together coordinate AMP. Residue Gly-201 coordinates ATP.

Belongs to the adenylate kinase family. Monomer.

The protein localises to the cytoplasm. It catalyses the reaction AMP + ATP = 2 ADP. It functions in the pathway purine metabolism; AMP biosynthesis via salvage pathway; AMP from ADP: step 1/1. In terms of biological role, catalyzes the reversible transfer of the terminal phosphate group between ATP and AMP. Plays an important role in cellular energy homeostasis and in adenine nucleotide metabolism. The sequence is that of Adenylate kinase from Pseudomonas paraeruginosa (strain DSM 24068 / PA7) (Pseudomonas aeruginosa (strain PA7)).